A 497-amino-acid polypeptide reads, in one-letter code: Nucleoside transporter 1 (497 aa).

Topologically, residues 1–26 (MSLKGGTAAPAPMAPPRKWYDMTSAE) are cytoplasmic. The helical transmembrane segment at 27–47 (FYVYVVAFMCGISIMMPINAV) threads the bilayer. Residues 48 to 77 (FSAPSYMLEYYLYATKDPFLVPKMTNFWTN) lie on the Extracellular side of the membrane. Residues 78–98 (VMTYYNLISMVTSLVVEPLTL) form a helical membrane-spanning segment. Residues 99-107 (LKSFRKIPM) are Cytoplasmic-facing. The chain crosses the membrane as a helical span at residues 108-128 (LVRLLGGLSVLIIEIIVLMVV). Topologically, residues 129-135 (PARGTTE) are extracellular. A helical transmembrane segment spans residues 136 to 156 (AGAVATMCIAGFIGGLGTSIF). Topologically, residues 157 to 172 (ESTVYGMFGAFPPSFT) are cytoplasmic. The helical transmembrane segment at 173–193 (SIMMGGVGISGVLTSLIQIIV) threads the bilayer. Residues 194 to 208 (KAALPDTYEGVKKQS) lie on the Extracellular side of the membrane. Residues 209–229 (YIYYSLDVGIQAATFIALIMM) form a helical membrane-spanning segment. The Cytoplasmic portion of the chain corresponds to 230–337 (RFNSFAQLHF…SVFSVLRSVK (108 aa)). Residues 286–299 (NAEAHKDDPLAERE) show a composition bias toward basic and acidic residues. The interval 286–316 (NAEAHKDDPLAERELSEEESGDSRAVEAAGE) is disordered. The helical transmembrane segment at 338-358 (WMFVACGFNFLITLFLFPGIA) threads the bilayer. Residues 359-361 (TGM) lie on the Extracellular side of the membrane. A helical membrane pass occupies residues 362-382 (FPESKWFATVAVFIFNCCDVL). At 383–400 (GRFSSAFRITWPRRYNQR) the chain is on the cytoplasmic side. The helical transmembrane segment at 401 to 421 (WIIVAASFARVIFVPLLLLHS) threads the bilayer. The Extracellular segment spans residues 422–432 (YHYIPSEAYGY). The chain crosses the membrane as a helical span at residues 433–453 (VMQVVFGLSSGYIASMALVLG). The Cytoplasmic segment spans residues 454–465 (PQSKGIDNDGKR). A helical transmembrane segment spans residues 466-486 (FVAGTLMGISILVGGTIGTVL). The Extracellular segment spans residues 487 to 497 (SIMTQTIRETY).

Belongs to the SLC29A/ENT transporter (TC 2.A.57) family.

It is found in the cell membrane. The enzyme catalyses adenosine(in) = adenosine(out). It catalyses the reaction hypoxanthine(out) = hypoxanthine(in). It carries out the reaction inosine(in) = inosine(out). The catalysed reaction is uridine(out) = uridine(in). The enzyme catalyses cytidine(in) = cytidine(out). In terms of biological role, nucleoside transporter with broad substrate specificity. Transports adenosine with high affinity. Can also transport hypoxanthine, inosine, uridine and cytidine. This chain is Nucleoside transporter 1, found in Crithidia fasciculata.